The primary structure comprises 134 residues: Pro-opiomelanocortin (134 aa).

An N-acetylserine modification is found at serine 1. At valine 13 the chain carries Valine amide. The residue at position 31 (serine 31) is a Phosphoserine. 2 stretches are compositionally biased toward basic and acidic residues: residues 43-52 and 79-104; these read LARERPEPAR and SAEK…DKRY. A disordered region spans residues 43–107; the sequence is LARERPEPAR…PAKDKRYGGF (65 aa).

This sequence belongs to the POMC family. In terms of processing, specific enzymatic cleavages at paired basic residues yield the different active peptides. As to expression, ACTH and MSH are produced by the pituitary gland.

Its subcellular location is the secreted. In terms of biological role, stimulates the adrenal glands to release cortisol. Its function is as follows. Anorexigenic peptide. Increases the pigmentation of skin by increasing melanin production in melanocytes. Functionally, increases the pigmentation of skin by increasing melanin production in melanocytes. Endogenous orexigenic opiate. In terms of biological role, endogenous opiate. The polypeptide is Pro-opiomelanocortin (POMC) (Loxodonta africana (African elephant)).